A 346-amino-acid chain; its full sequence is Ornithine carbamoyltransferase, catabolic (346 aa).

Carbamoyl phosphate-binding positions include 58-61, N85, R109, and 136-139; these read STRT and HPTQ. L-ornithine is bound by residues N168, D239, and 243 to 244; that span reads SL. Residues 280 to 281 and R332 contribute to the carbamoyl phosphate site; that span reads CL.

This sequence belongs to the aspartate/ornithine carbamoyltransferase superfamily. OTCase family.

The protein localises to the cytoplasm. The enzyme catalyses carbamoyl phosphate + L-ornithine = L-citrulline + phosphate + H(+). Its pathway is amino-acid degradation; L-arginine degradation via ADI pathway; carbamoyl phosphate from L-arginine: step 2/2. Reversibly catalyzes the transfer of the carbamoyl group from carbamoyl phosphate (CP) to the N(epsilon) atom of ornithine (ORN) to produce L-citrulline. The chain is Ornithine carbamoyltransferase, catabolic from Mycoplasma pneumoniae (strain ATCC 29342 / M129 / Subtype 1) (Mycoplasmoides pneumoniae).